The sequence spans 329 residues: MSSQKCASHLEIARLESLNFKISQLIYFVLIITTLFFTFFALKVIQKKCIFQLSTKILLYQNLFSANIHQIFLGITIVERLNIAFFKLNDKCIPLRPETNCQLYLEMFIAGLSGMVYGQTGLLFERACATFIKKYEKRKSLATGIITSIIVLLLSGSTARIIIWDDPLSEYQLACTSWPSKSRDRSTMFFSICTFISLFNLVISLLIRRHNEKLEYSTPFVVGPRFRKREVIDSTSTICFLTFFQFIFMFIYSFGVFLLGTIREIIGYEQYYFWVVWVYTIPFIAASFPILLIYRIRYSNTNRIMIIKQFTSTKQTQEDHIKQMKNVWN.

The next 7 membrane-spanning stretches (helical) occupy residues L25–I45, I57–I77, Y104–F124, G144–W164, T187–I207, I238–L258, and F273–I293.

This sequence belongs to the nematode receptor-like protein sra family.

It is found in the membrane. The protein is Serpentine receptor class alpha-3 (sra-3) of Caenorhabditis elegans.